The sequence spans 529 residues: Serine hydroxymethyltransferase 3, chloroplastic (529 aa).

A chloroplast-targeting transit peptide spans 1–60 (MQACCGGNSMASLQQPGRVQGSVFPPIMPPVTKFSQQLKFNISKPFRSSFLKRNLVSEMR). The residue at position 314 (Lys314) is an N6-(pyridoxal phosphate)lysine.

It belongs to the SHMT family. Homotetramer. Pyridoxal 5'-phosphate is required as a cofactor.

The protein localises to the plastid. The protein resides in the chloroplast. It catalyses the reaction (6R)-5,10-methylene-5,6,7,8-tetrahydrofolate + glycine + H2O = (6S)-5,6,7,8-tetrahydrofolate + L-serine. It participates in one-carbon metabolism; tetrahydrofolate interconversion. Inhibited by 5-CH3-H4PteGlu1/5 and 5-HCO-H4PteGlu1/5 in vitro. Functionally, catalyzes the interconversion of serine and glycine and directs the hydroxymethyl moiety of serine into the metabolic network of H4PteGlu(n)-bound one-carbon units. The sequence is that of Serine hydroxymethyltransferase 3, chloroplastic from Arabidopsis thaliana (Mouse-ear cress).